The primary structure comprises 148 residues: Large ribosomal subunit protein bL9 (148 aa).

This sequence belongs to the bacterial ribosomal protein bL9 family.

In terms of biological role, binds to the 23S rRNA. This Stutzerimonas stutzeri (strain A1501) (Pseudomonas stutzeri) protein is Large ribosomal subunit protein bL9.